Reading from the N-terminus, the 1511-residue chain is Pleiotropic ABC efflux transporter of multiple drugs (1511 aa).

Residues 1–14 (MPEAKLNNNVNDVT) show a composition bias toward polar residues. The segment at 1–32 (MPEAKLNNNVNDVTSYSSASSSTENAADLHNY) is disordered. Residues 1 to 517 (MPEAKLNNNV…LLIRNMWRLR (517 aa)) are Cytoplasmic-facing. S22 carries the phosphoserine modification. Phosphothreonine occurs at positions 49 and 51. The disordered stretch occupies residues 52 to 71 (AQSMQNSTQSAPNKSDAQSI). Residues S54, S58, and S61 each carry the phosphoserine modification. An ABC transporter 1 domain is found at 161–410 (LRKFQRSKET…FEDMGYVCPS (250 aa)). The chain crosses the membrane as a helical span at residues 518–542 (NNIGFTLFMILGNCSMALILGSMFF). Over 543–558 (KIMKKGDTSTFYFRGS) the chain is Extracellular. Residues 559–579 (AMFFAILFNAFSSLLEIFSLY) form a helical membrane-spanning segment. Residues 580 to 611 (EARPITEKHRTYSLYHPSADAFASVLSEIPSK) lie on the Cytoplasmic side of the membrane. Residues 612 to 628 (LIIAVCFNIIFYFLVDF) form a helical membrane-spanning segment. Residues 629-631 (RRN) are Extracellular-facing. A helical transmembrane segment spans residues 632-650 (GGVFFFYLLINIVAVFSMS). Residues 651-665 (HLFRCVGSLTKTLSE) lie on the Cytoplasmic side of the membrane. A helical membrane pass occupies residues 666–685 (AMVPASMLLLALSMYTGFAI). The Extracellular segment spans residues 686-774 (PKKKILRWSK…QYYHKDKWRG (89 aa)). N734 carries an N-linked (GlcNAc...) asparagine glycan. A helical transmembrane segment spans residues 775–793 (FGIGMAYVVFFFFVYLFLC). The Cytoplasmic portion of the chain corresponds to 794 to 1237 (EYNEGAKQKG…GTSLQGLQNQ (444 aa)). The tract at residues 824–858 (EKNANDPENVGERSDLSSDRKMLQESSEEESDTYG) is disordered. Residue K825 forms a Glycyl lysine isopeptide (Lys-Gly) (interchain with G-Cter in ubiquitin) linkage. The segment covering 833 to 846 (VGERSDLSSDRKML) has biased composition (basic and acidic residues). A phosphoserine mark is found at S837, S840, S841, S849, S850, and S854. The region spanning 869-1112 (FHWRNLCYEV…MIDYFESHGA (244 aa)) is the ABC transporter 2 domain. 905 to 912 (GASGAGKT) is an ATP binding site. The chain crosses the membrane as a helical span at residues 1238–1260 (MLAVFMFTVIFNPILQQYLPSFV). At 1261 to 1291 (QQRDLYEARERPSRTFSWISFIFAQIFVEVP) the chain is on the extracellular side. Residues 1292-1313 (WNILAGTIAYFIYYYPIGFYSN) traverse the membrane as a helical segment. The Cytoplasmic portion of the chain corresponds to 1314–1324 (ASAAGQLHERG). A helical transmembrane segment spans residues 1325–1349 (ALFWLFSCAFYVYVGSMGLLVISFN). The Extracellular portion of the chain corresponds to 1350–1354 (QVAES). A helical transmembrane segment spans residues 1355 to 1379 (AANLASLLFTMSLSFCGVMTTPSAM). The Cytoplasmic segment spans residues 1380–1388 (PRFWIFMYR). A helical membrane pass occupies residues 1389–1407 (VSPLTYFIQALLAVGVANV). Topologically, residues 1408–1476 (DVKCADYELL…VNSFYSERWR (69 aa)) are extracellular. An N-linked (GlcNAc...) asparagine glycan is attached at N1447. A helical transmembrane segment spans residues 1477 to 1499 (NYGIFICYIAFNYIAGVFFYWLA). The Cytoplasmic segment spans residues 1500 to 1511 (RVPKKNGKLSKK).

This sequence belongs to the ABC transporter superfamily. ABCG family. PDR (TC 3.A.1.205) subfamily. In terms of processing, ubiquitinylation mediates endocytosis and vacuolar degradation. Phosphorylation by casein kinase I stabilizes the protein half-life.

It is found in the cell membrane. FK506, isonitrile, enniatin, RU49953, kitasatospora E420, staurosporine CGP42700, prenyl-flavonoids, D-octapeptides were found to be inhibitors in vivo. Vanadate and oligomycin were found to be inhibitors in vitro. Its function is as follows. Active efflux of weakly charged organic compounds of 90 cubic Angstroms to 300 cubic Angstroms surface volume. Confers resistance to numerous chemicals including cycloheximide, sulfomethuron methyl, steroids, antiseptics, antibiotics, anticancer, herbicides, mycotoxins, insecticides, ionophores, alkaloids, flavonoids, phenothiazines, organotin compounds, carbazoles, lysosomotropic aminoesters, detergents, rhodamines and other fluorophores, azoles and other antifungals. Exhibits nucleoside triphosphatase activity. In Saccharomyces cerevisiae (strain ATCC 204508 / S288c) (Baker's yeast), this protein is Pleiotropic ABC efflux transporter of multiple drugs (PDR5).